Consider the following 353-residue polypeptide: Transcription factor MafA (353 aa).

Serine 14 carries the post-translational modification Phosphoserine. A Glycyl lysine isopeptide (Lys-Gly) (interchain with G-Cter in SUMO2) cross-link involves residue lysine 32. Disordered regions lie at residues 40-108 and 177-219; these read RFCH…GGTS and ADDM…GAGH. The span at 46-73 shows a compositional bias: low complexity; it reads PPGSLSSTPLSTPCSSVPSSPSFCAPSP. Serine 49 is modified (phosphoserine). 2 positions are modified to phosphothreonine: threonine 53 and threonine 57. Residues serine 61 and serine 65 each carry the phosphoserine modification. The segment covering 74–93 has biased composition (gly residues); that stretch reads GTGGGGGAGGGGGSSQAGGA. The span at 183 to 210 shows a compositional bias: basic residues; that stretch reads GHHHGAHHAAHHHHAAHHHHHHHHHHGG. The tract at residues 254 to 279 is basic motif; that stretch reads RLKQKRRTLKNRGYAQSCRFKRVQQR. One can recognise a bZIP domain in the interval 254 to 317; the sequence is RLKQKRRTLK…DLYKEKYEKL (64 aa). Residues 282–303 form a leucine-zipper region; it reads LESEKCQLQSQVEQLKLEVGRL. Residues 315–353 form a disordered region; the sequence is EKLAGRGGPGSAGGAGFPREPSPPQAGPGGAKGTADFFL. Over residues 319-330 the composition is skewed to gly residues; that stretch reads GRGGPGSAGGAG.

Belongs to the bZIP family. Maf subfamily. As to quaternary structure, forms homodimers or heterodimers. Monomers and dimers are able to bind DNA, but the off-rate is faster for monomers. Interacts with NEUROD1 and PDX1. May interact with MAFB, FOS, JUN and PCAF. Ubiquitinated, leading to its degradation by the proteasome. Post-translationally, phosphorylated at tyrosines. In terms of tissue distribution, expressed in the islets of Langerhans (at protein level).

The protein resides in the nucleus. Its function is as follows. Transcription factor that activates insulin gene expression. Acts synergistically with NEUROD1/BETA2 and PDX1. Binds the insulin enhancer C1/RIPE3b element. Binds to consensus TRE-type MARE 5'-TGCTGACTCAGCA-3' DNA sequence. This is Transcription factor MafA (MAFA) from Homo sapiens (Human).